The following is a 624-amino-acid chain: DNA-directed RNA polymerase III subunit rpc-3 (624 aa).

Disordered regions lie at residues 229–260 and 373–418; these read KRKL…EEDL and LAPK…ARMS. Residues 385–403 show a composition bias toward acidic residues; it reads DDSDDDEEDGDYSDSDEEM. Residues 551–572 are leucine-zipper; the sequence is CYATMVHCLQVLEVRRQKDKDV.

Belongs to the RNA polymerase beta chain family. As to quaternary structure, component of the RNA polymerase III (Pol III) complex consisting of 17 subunits.

It localises to the nucleus. Functionally, DNA-dependent RNA polymerase catalyzes the transcription of DNA into RNA using the four ribonucleoside triphosphates as substrates. Specific core component of RNA polymerase III which synthesizes small RNAs, such as 5S rRNA and tRNAs. This Neurospora crassa (strain ATCC 24698 / 74-OR23-1A / CBS 708.71 / DSM 1257 / FGSC 987) protein is DNA-directed RNA polymerase III subunit rpc-3 (rpc-82).